A 70-amino-acid chain; its full sequence is Probable ferredoxin TA0517 (70 aa).

4Fe-4S ferredoxin-type domains are found at residues 8-36 and 37-66; these read TEMDVDRNLCNYCGACVGMCPTDAIWLDE and TVIKIHEEKCIECGFCIVGCPTGAITAEWF. [4Fe-4S] cluster is bound by residues Cys17, Cys20, Cys23, Cys27, Cys46, Cys49, Cys52, and Cys56.

Requires [4Fe-4S] cluster as cofactor.

Its function is as follows. Ferredoxins are iron-sulfur proteins that transfer electrons in a wide variety of metabolic reactions. The sequence is that of Probable ferredoxin TA0517 from Thermoplasma acidophilum (strain ATCC 25905 / DSM 1728 / JCM 9062 / NBRC 15155 / AMRC-C165).